A 240-amino-acid chain; its full sequence is Proteasome subunit beta type-1 (240 aa).

M1 carries the post-translational modification N-acetylmethionine. The propeptide occupies 1–27 (MLSTAAYRDPDRELVMGPQGSAGPVQM). The O-linked (GlcNAc) serine glycan is linked to S57. S61 and S67 each carry phosphoserine. Y149 is modified (phosphotyrosine). S161 bears the Phosphoserine mark. Position 203 is an N6-acetyllysine (K203). S208 carries an O-linked (GlcNAc) serine glycan.

This sequence belongs to the peptidase T1B family. As to quaternary structure, the 26S proteasome consists of a 20S proteasome core and two 19S regulatory subunits. The 20S proteasome core is a barrel-shaped complex made of 28 subunits that are arranged in four stacked rings. The two outer rings are each formed by seven alpha subunits, and the two inner rings are formed by seven beta subunits. The proteolytic activity is exerted by three beta-subunits PSMB5, PSMB6 and PSMB7. Interacts with SERPINB2. Interacts with RFPL4A. In terms of tissue distribution, ubiquitous.

It localises to the cytoplasm. It is found in the nucleus. In terms of biological role, non-catalytic component of the 20S core proteasome complex involved in the proteolytic degradation of most intracellular proteins. This complex plays numerous essential roles within the cell by associating with different regulatory particles. Associated with two 19S regulatory particles, forms the 26S proteasome and thus participates in the ATP-dependent degradation of ubiquitinated proteins. The 26S proteasome plays a key role in the maintenance of protein homeostasis by removing misfolded or damaged proteins that could impair cellular functions, and by removing proteins whose functions are no longer required. Associated with the PA200 or PA28, the 20S proteasome mediates ubiquitin-independent protein degradation. This type of proteolysis is required in several pathways including spermatogenesis (20S-PA200 complex) or generation of a subset of MHC class I-presented antigenic peptides (20S-PA28 complex). The polypeptide is Proteasome subunit beta type-1 (Psmb1) (Rattus norvegicus (Rat)).